The chain runs to 89 residues: Small ribosomal subunit protein uS15 (89 aa).

The protein belongs to the universal ribosomal protein uS15 family. In terms of assembly, part of the 30S ribosomal subunit. Forms a bridge to the 50S subunit in the 70S ribosome, contacting the 23S rRNA.

One of the primary rRNA binding proteins, it binds directly to 16S rRNA where it helps nucleate assembly of the platform of the 30S subunit by binding and bridging several RNA helices of the 16S rRNA. Its function is as follows. Forms an intersubunit bridge (bridge B4) with the 23S rRNA of the 50S subunit in the ribosome. The sequence is that of Small ribosomal subunit protein uS15 from Bacteroides thetaiotaomicron (strain ATCC 29148 / DSM 2079 / JCM 5827 / CCUG 10774 / NCTC 10582 / VPI-5482 / E50).